Consider the following 177-residue polypeptide: MNDHDGVLTHLDEQGAARMVDVSAKAVTLRRARASGAVLMKPSTLDMICHGTAAKGDVIATARIAGIMAAKRTGELIPLCHPLGIEAVTVTLEPQGADRLSIAATVTTVARTGVEMEALTAVTVTALTVYDMCKAVDRAMTITDIRLDEKSGGRSGHYRRHDADVKPSDGGSTEDGC.

Residues 79-81 (LCH) and 116-117 (ME) contribute to the substrate site. The active site involves Asp-131. The tract at residues 150 to 177 (KSGGRSGHYRRHDADVKPSDGGSTEDGC) is disordered.

Belongs to the MoaC family. As to quaternary structure, homohexamer; trimer of dimers.

It carries out the reaction (8S)-3',8-cyclo-7,8-dihydroguanosine 5'-triphosphate = cyclic pyranopterin phosphate + diphosphate. The protein operates within cofactor biosynthesis; molybdopterin biosynthesis. Functionally, catalyzes the conversion of (8S)-3',8-cyclo-7,8-dihydroguanosine 5'-triphosphate to cyclic pyranopterin monophosphate (cPMP). The protein is Cyclic pyranopterin monophosphate synthase 3 (moaC3) of Mycobacterium bovis (strain ATCC BAA-935 / AF2122/97).